The primary structure comprises 859 residues: DNA mismatch repair protein MutS (859 aa).

617 to 624 (GPNMGGKS) is an ATP binding site. Residues 801–820 (TSLPHEVAPQAPGKPSVPQQ) form a disordered region.

It belongs to the DNA mismatch repair MutS family.

This protein is involved in the repair of mismatches in DNA. It is possible that it carries out the mismatch recognition step. This protein has a weak ATPase activity. The protein is DNA mismatch repair protein MutS of Pseudomonas fluorescens (strain ATCC BAA-477 / NRRL B-23932 / Pf-5).